The chain runs to 297 residues: Guanylate kinase (297 aa).

The 180-residue stretch at 4 to 183 folds into the Guanylate kinase-like domain; the sequence is GKMIIISGPS…AVAKITDVLH (180 aa). 11–18 is an ATP binding site; the sequence is GPSGVGKG. The unknown stretch occupies residues 204-297; that stretch reads EQIVKEKYMY…EQKHYNNDEF (94 aa).

Belongs to the guanylate kinase family.

It is found in the cytoplasm. The catalysed reaction is GMP + ATP = GDP + ADP. Its function is as follows. Essential for recycling GMP and indirectly, cGMP. This chain is Guanylate kinase (gmk), found in Mycoplasma capricolum subsp. capricolum (strain California kid / ATCC 27343 / NCTC 10154).